A 173-amino-acid chain; its full sequence is Small ribosomal subunit protein uS5 (173 aa).

In terms of domain architecture, S5 DRBM spans 18 to 81 (LREKMIAVNR…EQARRGMFKV (64 aa)).

Belongs to the universal ribosomal protein uS5 family. Part of the 30S ribosomal subunit. Contacts proteins S4 and S8.

Functionally, with S4 and S12 plays an important role in translational accuracy. Located at the back of the 30S subunit body where it stabilizes the conformation of the head with respect to the body. In Bordetella petrii (strain ATCC BAA-461 / DSM 12804 / CCUG 43448), this protein is Small ribosomal subunit protein uS5.